Reading from the N-terminus, the 272-residue chain is NH(3)-dependent NAD(+) synthetase (272 aa).

ATP is bound at residue 45–52; it reads GISGGQDS. Mg(2+) is bound at residue Asp51. Position 138 (Arg138) interacts with deamido-NAD(+). Residue Thr158 coordinates ATP. Glu163 is a Mg(2+) binding site. Deamido-NAD(+) contacts are provided by Lys171 and Asp178. Lys187 and Thr209 together coordinate ATP. 258 to 259 serves as a coordination point for deamido-NAD(+); sequence HK.

It belongs to the NAD synthetase family. As to quaternary structure, homodimer.

It catalyses the reaction deamido-NAD(+) + NH4(+) + ATP = AMP + diphosphate + NAD(+) + H(+). Its pathway is cofactor biosynthesis; NAD(+) biosynthesis; NAD(+) from deamido-NAD(+) (ammonia route): step 1/1. Catalyzes the ATP-dependent amidation of deamido-NAD to form NAD. Uses ammonia as a nitrogen source. This is NH(3)-dependent NAD(+) synthetase from Bacillus cereus (strain ATCC 10987 / NRS 248).